The sequence spans 1098 residues: Contactin-5 (1098 aa).

The N-terminal stretch at 1–23 (MASCWRLILFLSVTRWLSDYSEA) is a signal peptide. 6 consecutive Ig-like C2-type domains span residues 98–189 (PVFV…ATLQ), 195–281 (NFSG…RVLS), 299–384 (PKIE…GQLQ), 389–473 (PHWV…AELK), 479–568 (PSFE…LSVK), and 570–659 (PTRI…DSVS). Cysteines 122 and 172 form a disulfide. 2 N-linked (GlcNAc...) asparagine glycosylation sites follow: asparagine 137 and asparagine 195. 2 disulfide bridges follow: cysteine 216–cysteine 268 and cysteine 321–cysteine 368. Asparagine 396, asparagine 448, and asparagine 539 each carry an N-linked (GlcNAc...) asparagine glycan. 3 disulfide bridges follow: cysteine 410-cysteine 457, cysteine 502-cysteine 550, and cysteine 592-cysteine 649. Fibronectin type-III domains follow at residues 672-770 (PPGV…TNEA), 775-872 (APSN…SAEG), 877-971 (APTD…TKRH), and 976-1066 (PPGN…SYSG). N-linked (GlcNAc...) asparagine glycosylation is found at asparagine 778, asparagine 815, and asparagine 930. The disordered stretch occupies residues 956–982 (GYGPPSREASTTTKRHPPREPPGNLRW). An N-linked (GlcNAc...) asparagine glycan is attached at asparagine 1001. Residue serine 1071 is the site of GPI-anchor amidated serine attachment. Residues 1072–1098 (AQSTLHSLSKWSSVTLLLALMLPSSSW) constitute a propeptide, removed in mature form.

The protein belongs to the immunoglobulin superfamily. Contactin family. Interacts with PTPRG. In terms of tissue distribution, expressed in the nervous system. Preferentially expressed in the central auditory pathways.

The protein localises to the cell membrane. In terms of biological role, contactins mediate cell surface interactions during nervous system development. Has some neurite outgrowth-promoting activity in the cerebral cortical neurons but not in hippocampal neurons. Involved in neuronal activity in the auditory system. This Mus musculus (Mouse) protein is Contactin-5 (Cntn5).